The chain runs to 212 residues: Stem bromelain (212 aa).

Disulfide bonds link Cys23–Cys63 and Cys57–Cys96. Cys26 is an active-site residue. The N-linked (GlcNAc...) asparagine glycan is linked to Asn117. Cysteines 152 and 199 form a disulfide. His158 is an active-site residue.

This sequence belongs to the peptidase C1 family.

It carries out the reaction Broad specificity for cleavage of proteins, but strong preference for Z-Arg-Arg-|-NHMec among small molecule substrates.. Its function is as follows. Cysteine proteinase with a high level of diversity in substrate specificity. In Ananas comosus (Pineapple), this protein is Stem bromelain.